The chain runs to 644 residues: Threonine--tRNA ligase (644 aa).

In terms of domain architecture, TGS spans 3–64 (EMIRITFPDG…QEDGSISIIT (62 aa)). The segment at 245–542 (DHRKLGKELE…LIEEYKGAFP (298 aa)) is catalytic. The Zn(2+) site is built by Cys338, His389, and His519.

It belongs to the class-II aminoacyl-tRNA synthetase family. As to quaternary structure, homodimer. It depends on Zn(2+) as a cofactor.

The protein localises to the cytoplasm. It carries out the reaction tRNA(Thr) + L-threonine + ATP = L-threonyl-tRNA(Thr) + AMP + diphosphate + H(+). In terms of biological role, catalyzes the attachment of threonine to tRNA(Thr) in a two-step reaction: L-threonine is first activated by ATP to form Thr-AMP and then transferred to the acceptor end of tRNA(Thr). Also edits incorrectly charged L-seryl-tRNA(Thr). The sequence is that of Threonine--tRNA ligase from Geobacillus sp. (strain WCH70).